A 181-amino-acid polypeptide reads, in one-letter code: MPNNEAKFSVNQPLKTQKLFIGVQIFFRIVAIAASVASSWLMITSKQVIDIGGIVLDARYSYSPEFKFLAFTNIVVGCFSLLSLLFLVLVVRQGSNPNHYFFLFLHDLAMMSLVVGGCAAATTVGFLGKHGNSHTGWMQICDNFGKFCNRAQTSVTISYLNLICLSILTITSASKSRKMEA.

At 1–18 (MPNNEAKFSVNQPLKTQK) the chain is on the cytoplasmic side. A helical membrane pass occupies residues 19 to 39 (LFIGVQIFFRIVAIAASVASS). Over 40–70 (WLMITSKQVIDIGGIVLDARYSYSPEFKFLA) the chain is Extracellular. The helical transmembrane segment at 71-91 (FTNIVVGCFSLLSLLFLVLVV) threads the bilayer. At 92-100 (RQGSNPNHY) the chain is on the cytoplasmic side. The chain crosses the membrane as a helical span at residues 101-121 (FFLFLHDLAMMSLVVGGCAAA). Topologically, residues 122–152 (TTVGFLGKHGNSHTGWMQICDNFGKFCNRAQ) are extracellular. A helical membrane pass occupies residues 153–173 (TSVTISYLNLICLSILTITSA). The Cytoplasmic portion of the chain corresponds to 174–181 (SKSRKMEA).

It belongs to the Casparian strip membrane proteins (CASP) family. As to quaternary structure, homodimer and heterodimers.

It localises to the cell membrane. The chain is CASP-like protein 1F1 from Populus trichocarpa (Western balsam poplar).